The chain runs to 449 residues: Flavonol 7-O-beta-glucosyltransferase UGT74F1 (449 aa).

The active-site Proton acceptor is histidine 18. Histidine 18 contributes to the an anthocyanidin binding site. Aspartate 111 serves as the catalytic Charge relay. Residues threonine 133, glutamine 327, histidine 342, tryptophan 345, asparagine 346, serine 347, glutamate 350, aspartate 366, and glutamine 367 each coordinate UDP-alpha-D-glucose.

The protein belongs to the UDP-glycosyltransferase family.

The enzyme catalyses a 7-O-hydroxy-flavonol + UDP-alpha-D-glucose = a flavonol 7-O-beta-D-glucoside + UDP + H(+). In terms of biological role, possesses quercetin 7-O-glucosyltransferase and 4'-O-glucosyltransferase activities in vitro. Also active in vitro on benzoates and benzoate derivatives. Has low affinity for the tryptophan precursor anthranilate. Catalyzes the formation of anthranilate glucose ester. Is a minor source of this activity in the plant. This chain is Flavonol 7-O-beta-glucosyltransferase UGT74F1, found in Arabidopsis thaliana (Mouse-ear cress).